The chain runs to 105 residues: Co-chaperonin GroES (105 aa).

This sequence belongs to the GroES chaperonin family. Heptamer of 7 subunits arranged in a ring. Interacts with the chaperonin GroEL.

The protein localises to the cytoplasm. In terms of biological role, together with the chaperonin GroEL, plays an essential role in assisting protein folding. The GroEL-GroES system forms a nano-cage that allows encapsulation of the non-native substrate proteins and provides a physical environment optimized to promote and accelerate protein folding. GroES binds to the apical surface of the GroEL ring, thereby capping the opening of the GroEL channel. The sequence is that of Co-chaperonin GroES from Methylovorus sp. (strain SS1 / DSM 11726).